Here is a 336-residue protein sequence, read N- to C-terminus: Ribosomal RNA large subunit methyltransferase F (336 aa).

This sequence belongs to the methyltransferase superfamily. METTL16/RlmF family.

The protein resides in the cytoplasm. The catalysed reaction is adenosine(1618) in 23S rRNA + S-adenosyl-L-methionine = N(6)-methyladenosine(1618) in 23S rRNA + S-adenosyl-L-homocysteine + H(+). Functionally, specifically methylates the adenine in position 1618 of 23S rRNA. This is Ribosomal RNA large subunit methyltransferase F from Serratia proteamaculans (strain 568).